The primary structure comprises 835 residues: Involucrin (835 aa).

The segment covering M1–L15 has biased composition (polar residues). Disordered regions lie at residues M1 to R133, E150 to P206, G221 to H285, G321 to Q342, G381 to E428, L446 to P486, G501 to E548, and L566 to L809. Residues E76–H91 are compositionally biased toward low complexity. Composition is skewed to basic and acidic residues over residues W92 to R115 and Q159 to Q168. Residues Q169 to G181 show a composition bias toward low complexity. Composition is skewed to basic and acidic residues over residues Q182–Q198 and Q222–Q268. 3 stretches are compositionally biased toward low complexity: residues Q269–G281, Q329–G341, and Q389–G401. Basic and acidic residues-rich tracts occupy residues Q402–G421 and L446–E464. Over residues Q509–G521 the composition is skewed to low complexity. Basic and acidic residues-rich tracts occupy residues Q522–G541, L566–E584, and K594–E620. Positions H655 to G668 are enriched in low complexity. Positions Q669–E685 are enriched in basic and acidic residues. Residues L693–P710 are compositionally biased toward low complexity. 3 stretches are compositionally biased toward basic and acidic residues: residues K711–E721, Q729–A738, and K751–Q775. The span at Q776–Q789 shows a compositional bias: polar residues.

Belongs to the involucrin family. In terms of assembly, directly or indirectly cross-linked to cornifelin (CNFN). Substrate of transglutaminase. Specific glutamines or lysines are cross-linked to keratins, desmoplakin and to inter involucrin molecules. As to expression, keratinocytes of epidermis and other stratified squamous epithelia.

Its subcellular location is the cytoplasm. Part of the insoluble cornified cell envelope (CE) of stratified squamous epithelia. The sequence is that of Involucrin (IVL) from Pongo pygmaeus (Bornean orangutan).